The primary structure comprises 374 residues: UPF0754 membrane protein SAB1779c (374 aa).

2 helical membrane-spanning segments follow: residues Leu-4–Ile-24 and Ser-354–Val-374.

This sequence belongs to the UPF0754 family.

The protein localises to the cell membrane. The protein is UPF0754 membrane protein SAB1779c of Staphylococcus aureus (strain bovine RF122 / ET3-1).